Consider the following 505-residue polypeptide: DNA repair protein RadA (505 aa).

Residues 10-27 form a C4-type zinc finger; the sequence is CSACGADHAQWFGRCPKC. Residue 107–114 participates in ATP binding; the sequence is GDPGIGKS. The RadA KNRFG motif motif lies at 281 to 285; that stretch reads KNRFG. The interval 380-505 is lon-protease-like; it reads DAYLSVAGGL…KIEEDLGKKD (126 aa). The segment at 485–505 is disordered; sequence NTTDQGNGSEAKIEEDLGKKD. The span at 495–505 shows a compositional bias: basic and acidic residues; it reads AKIEEDLGKKD.

This sequence belongs to the RecA family. RadA subfamily.

In terms of biological role, DNA-dependent ATPase involved in processing of recombination intermediates, plays a role in repairing DNA breaks. Stimulates the branch migration of RecA-mediated strand transfer reactions, allowing the 3' invading strand to extend heteroduplex DNA faster. Binds ssDNA in the presence of ADP but not other nucleotides, has ATPase activity that is stimulated by ssDNA and various branched DNA structures, but inhibited by SSB. Does not have RecA's homology-searching function. The sequence is that of DNA repair protein RadA from Synechocystis sp. (strain ATCC 27184 / PCC 6803 / Kazusa).